We begin with the raw amino-acid sequence, 151 residues long: MRPWLLACLVACFVGAWAPAIHAQGAFEDCCLAYHSHIKWRLLRRAHSYQRQDVSGSCNLPAVIFFFPQKDKMVCGKPGAKWVQFGMKILDNRNKKDSKPHHSGRRFFQGPQSGVRKLSSGTSRPLLLKFSGPTRSSKRKASLLTTAIPGP.

An N-terminal signal peptide occupies residues 1-23 (MRPWLLACLVACFVGAWAPAIHA). Cystine bridges form between cysteine 30–cysteine 58 and cysteine 31–cysteine 75. A disordered region spans residues 93–151 (RNKKDSKPHHSGRRFFQGPQSGVRKLSSGTSRPLLLKFSGPTRSSKRKASLLTTAIPGP).

Belongs to the intercrine beta (chemokine CC) family.

It is found in the secreted. Potentially involved in T-cell development. Recombinant protein shows chemotactic activity on thymocytes, macrophages, THP-1 cells, and dendritics cells but is inactive on peripheral blood lymphocytes and neutrophils. Binds to CCR9. Binds to atypical chemokine receptor ACKR4 and mediates the recruitment of beta-arrestin (ARRB1/2) to ACKR4. The protein is C-C motif chemokine 25 (CCL25) of Sus scrofa (Pig).